The primary structure comprises 621 residues: Kelch-like protein 40 (621 aa).

The BTB domain maps to 33 to 98; it reads LDCVVRAGER…LYTSEIALDE (66 aa). Positions 133-239 constitute a BACK domain; it reads CLAVFRLGLL…PRAFLESRVE (107 aa). The disordered stretch occupies residues 265–295; the sequence is ITTLRKKKKGKDGAGAKEADKGTSKAKAEED. Positions 275-292 are enriched in basic and acidic residues; it reads KDGAGAKEADKGTSKAKA. 5 Kelch repeats span residues 360–412, 413–462, 463–510, 512–557, and 559–613; these read QVFV…EALN, SIYV…SHMD, LVYV…VHDG, IIVA…SLVG, and LYAI…PVRL.

This sequence belongs to the KLHL40 family. As to quaternary structure, component of the BCR(KLHL40) E3 ubiquitin ligase complex, at least composed of CUL3, KLHL40 and RBX1. Interacts with LMOD3. As to expression, highly expressed in fetal (19, 23 and 31 weeks of gestation) and adult skeletal muscle; expression levels tend to be higher in fetal compared to postnatal muscles (at protein level). Also expressed in fetal and adult heart.

It is found in the cytoplasm. Its subcellular location is the myofibril. The protein localises to the sarcomere. It localises to the a band. The protein resides in the i band. Its function is as follows. Substrate-specific adapter of a BCR (BTB-CUL3-RBX1) E3 ubiquitin ligase complex that acts as a key regulator of skeletal muscle development. The BCR(KLHL40) complex acts by mediating ubiquitination and degradation of TFDP1, thereby regulating the activity of the E2F:DP transcription factor complex. Promotes stabilization of LMOD3 by acting as a negative regulator of LMOD3 ubiquitination; the molecular process by which it negatively regulates ubiquitination of LMOD3 is however unclear. In Homo sapiens (Human), this protein is Kelch-like protein 40.